The primary structure comprises 231 residues: MKVVIVTSVASLLDASIQFQKTAYRHHCNYLSMQVVKEIEEFGTINEKNLEFDTWTDVIQNDEIDALVFYRVKQIGISTGVLYKSMMRNRTKPISMYFVRDCLAFDGDPPSFRMTSCNINAYNRNKIKDLIILMNMKTCNKKIIGEFIIDNFGSVDALLSIINSNVTWVTSVINNSNGRGINIRVSNNKMLTITSFRRFVNKLKMYKTTKCASQLDNVCTEMNKMDIIDKK.

It belongs to the orthopoxvirus OPG058 family.

The protein resides in the host nucleus. It localises to the host nucleolus. The chain is Protein OPG061 (OPG061) from Vaccinia virus (strain L-IVP) (VACV).